A 257-amino-acid polypeptide reads, in one-letter code: Neurotrophin-3 (257 aa).

A signal peptide spans 1–18 (MSILFYVIFLAYLRGIQS). Positions 19-138 (TNMDQRSLPE…VLNRTSRRKR (120 aa)) are excised as a propeptide. An N-linked (GlcNAc...) asparagine glycan is attached at Asn-131. Disulfide bonds link Cys-152–Cys-217, Cys-195–Cys-246, and Cys-205–Cys-248.

It belongs to the NGF-beta family. As to expression, in the embryo, the expression peak at E4.5 and decreases at later stages of development.

The protein localises to the secreted. In terms of biological role, seems to promote the survival of visceral and proprioceptive sensory neurons. This is Neurotrophin-3 (NTF3) from Gallus gallus (Chicken).